The primary structure comprises 337 residues: Pentalenene synthase (337 aa).

Mg(2+)-binding residues include Asp-80 and Asp-84. A DDXXD motif motif is present at residues Asp-80 to Asp-84. A disulfide bond links Cys-128 and Cys-136. Residues Asn-219, Ser-223, and Glu-227 each contribute to the Mg(2+) site.

It belongs to the terpene synthase family. Monomer. Requires Mg(2+) as cofactor.

It carries out the reaction (2E,6E)-farnesyl diphosphate = pentalenene + diphosphate. It participates in sesquiterpene biosynthesis; pentalenene biosynthesis; pentalenene from farnesyl diphosphate: step 1/1. The protein operates within antibiotic biosynthesis; pentalenolactone biosynthesis. In terms of biological role, catalyzes the cyclization of farnesyl diphosphate (FPP) to the tricyclic sesquiterpene pentalenene, which is the hydrocarbon precursor of the pentalenolactone family of antibiotics produced by a variety of Streptomyces species. The sequence is that of Pentalenene synthase (penA) from Streptomyces exfoliatus (Streptomyces hydrogenans).